Here is a 4650-residue protein sequence, read N- to C-terminus: MDTMKRKHQGLFPVLNDGGREPSVTVNEISSEARERAIAYTARRGYDIVHFLRTVWSIVLQQFLETDLVCFVFFDHSGVQVCEVPVSREESIPNLLERIAELRPLPSALCEETRMNTGLLIGDTSLDVNPTAVLDTFRRIQKDNQPCDCLLVLEGEPPHRLALVATTTLLSSDQATAVASTVSQVMVEMSAEDNSRTVGDLSLLSEHDQQCLVRWNNFQAPPTNTDGSILDTIRAKALSQPEATAIHSPDVIMTYHELDTISNKLAVHLRLLGVRPDILVPFLFQRCHWVIVVQLAVLKAGGAFVPLEPAHPNARLAEITKRTNCGFLLTSDANAGRAALLAEKVVCINHSLMSSLPTDFTTYRLVPLSSPSSPAYVLFTSGSTGQPKGCVVDCRAMAQIPNQAVVQSMGLSSSTRVLQFASYTFAISIFEIYYALGSGATICMPTDHDRINSLATVMDEMKITWACMTPSLLRTLDPERSPATLKRVFLGGEPVVKGEFEAWAAIVDLVYVYGASEVSGAIGFTDHQCDGNDIAYRAFPGMRFWISDALDYHKLAPVGVTGELILEGPALAQRYLDDVQSTLTAFIDPPLWRQSLGLPTVGAASRMYKTGDLFRYAHDGSVIHVGRKGTQVKIRGKRLDLGEVEFHVSKCCPNVARVIAETAAPLDANGVPALVLFLYYSADDAGERNEETTPQTLFAAASERFQSIVQSTQTKLEQTLPDHMLPSFYLPLASIPMTVTGKVDRRALRESVQKCTRRELEAYQPTGVVELVPPETVLEKALHAVFAQVLRIDGATFGVHHSFIRLGGDSLAAMRAVGLLTTKEYNVTVADILGQPTVSKLAQYLRNTERPQRASAAASAPPPFSLLAGGHDETVASAAQQCGMSISAIEDCYPCTALQQGLMISTMRVPGRYIARCVFDLARGLDLERLKAAWQQTVDANVILRTRIVRRASGDLIQAVLGRQVSAIQWQSYPTVGAYKMEDAVIPMQPGDALARFALIGDTFSGWSLGLTLHHAIFDAHSLGLLLEQTQQAYYGANLDPNLFSPFIETVQKQDGASEREFWTATFADIHAPVFPSLPHDRAVPRASTHLERTIPLLSRTGSGITLSNVARLAWAIVVSAHTDSEDVVFGVTVNGRATATAGAQDMTGPTIATVPFPVRCQKQKKVADVLEAVQSLAISMMAFEQTGLQKIRQMSPQAAAACDFQSQLIFQRPAALDPSHQHDAPPIMVGKTALHGLEDFSVFIDYVIGAYFDGDILPGYMAERMMGQFANVLQQLCAGQHDRVVGELELNAQKEPLMPAVSSWDRGLTYRELDVLSATIAQTIIMPAGVKERDRVALCFEKSVWPVLSMLAVLRAGATAVNIDPTLPPARMSAILETGLPVIEISQTSVPMTTTTTEEAAQIQWPTVQPNDVAFILFTSGSTGTPKGIVIEHRHFTTAFHHHRDALLQEIFFTWVHGGCLCIPSEEQRLSNLAGFIREHQVNWAIMTPSASTILRPQSVPGLETLVLAGEPIPVELMELWSSRLRLLNGYGPAEAFTCAFNRIEPGSHHPGLFGPMCGVVGWVTVPDNADRLAALGAVGELLIEGPTVTRGYLDLPELSGEAFIDAPEWLRKIRPGYLGRKDTQVKQVVAEVVQPQGSAAVMLVAFVYTAPVQGHEEKTQLLLREPDENFLQACAAAVARLEGVLPAHMIPTAMCPLYRVPYGATSKIDRRQLRQAAERLTPEQLQAYTTGVADNCKNVSKEPPVSAAEKKWQALWARVLGVPTQRIGRDDLFFRLGGDSLSVIRLLDLAGQEGLPHLTFQDVLQNPRLREIAALSETRDSSRGSDDNDDGPAPFALVKDADALLRVATNLIAATVHQRGAYQAWAVTAKCNPILRTRIFQTPDGSSYQAVLNSPLNWSRHETLDDVFASQPVMGLGTPLAHLMLSPGHLHLVIHHALYDGWSLSLLVAEVDKAYLGLPLPPAAKFNNFIAHVESSMQIIDLPDNPTQSNVTVASKIKLAWALVSRAYTNNSDTVTGFVSSGRTAPVAGIVKVPGPTIASVPLRIRLSATQRYEHLGLQNISQQSEGGAAACQFQTLIAVEAKEHEVQGAGERHTWFCGEKTRPGGGAIEVTATFDPEVLASEQMHRVLAQLDHFLVQIQAVSEASATTIADLDILSDEDLQQLLRWNALPLPPTPWGCNRCVHDLVHDACQRRPAAVAIEAWDGQFTYQQIDDHVADLAHRIQTLGVVRPDTFVGLYIEKSRWTVVAQLAPLQRLRELCAITKLPLILTTEDQQEAVAGLFSLPTGCTRVKPSNAMYTIATSGTTGKPKVAVIEHGCFIANIQPIIDAVGINANSRVLQFAGYGFDAMLIEHMITLLVITEMGANWAMLTASVIQLLTPTNVPTLTTLVQAGEPMQQGIVDRWASHNCIPPGAAPYDIGYATGGVTWVVDPDTLDPVPIGAEGELIIEGDIVGRGYLNDLERTAAAFIPCPHWLADLRRSSNANGTEPGPGTQLHRVYRTGDLIKLRGQRLELTEVEHHVQQTFPGALQVVAAVSTLGAATDTDRTDILLPASNPDFHKAVETTELALVERVPAYMVPSIFIPLSRVPRDNNGKVDRRLINARLSSLSRKEADGYSPSSSAASTIVAPQNRLQHDIRAIWAGVLGMADEDIGIHNSFFRIGGDSITSMQHRTISQLALHATRKDDGEKRALPSEEEADVGLDHASVFLHLEGPGVGGAESMARALAVIVETHPMLRARFEKSSDGTWRQRVTGNADQSNYRYYHHGVTSQEQITSICSASQQALDIRHGPLLIIDQFERDDATTWLFLVAHHLVIDLVSWRVVLADLEQLLTTGERPKVPPTSFLRWCQLQADYAARLSAPHQVEEDQETDISAYWGKGVTRNTHRDVDRYALILDKQTSELLLTKANIALNTQPVEIVQAALLHSFVHLFPDRPAPIIFSEGHGREPWDATIDITRTVGWFTTICPAQVSLDASEDFVTALRRTKDARRRSPANGWEHFTARYLHPQGPKTMKGMEILFNYQGRYQQLERPDAMLKIDMANQFTAGDVAPDMQRFAPIEDRLYQWGPVCERSLRQAAAQLTGMSGHIQTVSDFPLGSSHVTSDLLDETLRTMRTRLANGRQLIVQDVYPCTPIQQGMLMGYTRTPWHYEQVLTWRVVGASLRDVARLQAAWQHVVNAHPALRTVFLQTSDGHIEQLVLQDYTPVVRIHQDSSHQSHAPEPEPVSLDALKPLHELHVHTSSTSGDVVLRLHINHALVDGTSTKILRRDLVCAYEGQPLPTMMLESQSYRDYVEYMLTQAASLKSHQYWQSHLQGALPCLVPSLQGHDGSNDLPQSVSTIRSFTMELGPTEALDTFCEVHELALTVLFHVAWALVVKQYTASEDVCFGYIASARHAPVQGIDDMVGPLINMLVGRIDMPAGMTLLSVLQQYNRTYLHSLEHQHQPLAEALNAIGSTSGELFNTLLTVQYQQDPRKDAAGDPSGIVLLDEDMEDKSEYPVTLNVAVFPDRVELLFSHHTAHMSDWYAARMARCFRHALAEVLTHPSLPVGEIQVVDDSQRQQILQRNEPLADPVNTCVHHIIHQRCLDFPASAAVCSWDGEFTYEELDTVSSALAEELIDYSIGVDMTIPVLLEKSRWVPVAVLGILKTGASFVLMDASHPEARLRGLCEDVQAPLILASRGTFSKASNLAPHVVCLGERLLGEIACPHPARWSRVPVCASNAAYTVFTSGSTGKPKGAILDHSCLATAAKHLQSCMYMNSASRVLQFSSHAWDIAVADIVLTLLAGGCVCIPSEEERTGDIAAAANRMRVNWAILTPTVSRLVKPGALKHLQTLVLAGEPLSPSDLAIWHDKVRLISAYGPAECCPISTVSEPLTASSNPRDIGRPPANVAWIVDRDNHARLVPEGVVGELLLEGPTVGRGYVNNAQQTAAAFIDPPLWLRGLRHGQSSTRLYKTGDLARFTPDGRLIFVGRKDNQIKIRGQRLELGEVEAQAGIAFLNRDVTVELVGQADDAFLVAFVHPMADDHESPAAGTGSLLRQPHSQQFQESVRAAISTLREALPSYMVPTAFLPLAWVPKSPTGKTDRKRLIELAASLSQSELDVYSGTNATRRTPSTPLEAQLQDLVARVLKRSPGSIALDEDLFHIGLDSLRAMTLASLAAKEGLKLLALTIFQHPRLSQLAAVLEEGARAAAVSSTTSSSPQSTPNPLLDSVDDLCTKWKIDRSQVADVLPTTFYQRGSLDCQHLAHMVLTFSQPVDVARLQSVVVAAIRHYDILRTVFVPFENTTVQLILHKMSLPTVEIQTDKDLQSTVQSICQQDIQTPIPPGHPVTRLFFVISRKQDDNHLAMILRLHHAQYDGVSIRRIHNYITAAYEEPTHPPLTTAGYADFLNARRHHQHASTFQFWRDLLHGSTMTCLASGGGHISTTTHRHRMDLLVTSAREIPRPRLQPGLTMATYLKAAWALVLAAQTHTHDLVFAQLVSGRNLPVPDIDRIVGPCINYIPVRVTLQPTWTCSELLRNVQAQHIRTMAHDAVDFDELVARSTAWPAGTEIGTGVHFLHGDRFWDEVRTVAGVECRSQHVDFKLLQTYPMLTCTGSPDAEEATGRSVLGVALTSAVFGQEVADRVFEVFLGMLDYLTTTPEKLVAEVI.

The adenylation 1 stretch occupies residues 227-628 (GSILDTIRAK…DGSVIHVGRK (402 aa)). The 77-residue stretch at 773–849 (PPETVLEKAL…KLAQYLRNTE (77 aa)) folds into the Carrier 1 domain. An O-(pantetheine 4'-phosphoryl)serine modification is found at Ser810. The tract at residues 890–1212 (EDCYPCTALQ…CDFQSQLIFQ (323 aa)) is condensation 1. The interval 1288–1622 (ELELNAQKEP…RKIRPGYLGR (335 aa)) is adenylation 2. One can recognise a Carrier 2 domain in the interval 1745–1822 (PPVSAAEKKW…EIAALSETRD (78 aa)). The residue at position 1782 (Ser1782) is an O-(pantetheine 4'-phosphoryl)serine. The condensation 2 stretch occupies residues 1850–2110 (ATNLIAATVH…GEKTRPGGGA (261 aa)). The segment at 2183–2511 (RCVHDLVHDA…RTGDLIKLRG (329 aa)) is adenylation 3. One can recognise a Carrier 3 domain in the interval 2630-2708 (APQNRLQHDI…EADVGLDHAS (79 aa)). Residue Ser2667 is modified to O-(pantetheine 4'-phosphoryl)serine. The epimerase stretch occupies residues 2722-2998 (ESMARALAVI…KDARRRSPAN (277 aa)). Residues 3128–3565 (VQDVYPCTPI…VDDSQRQQIL (438 aa)) form a condensation 3 region. Positions 3578 to 3980 (CVHHIIHQRC…FVGRKDNQIK (403 aa)) are adenylation 4. A Carrier 4 domain is found at 4114–4190 (TPSTPLEAQL…QLAAVLEEGA (77 aa)). Residue Ser4151 is modified to O-(pantetheine 4'-phosphoryl)serine. The segment at 4249-4648 (HMVLTFSQPV…TTTPEKLVAE (400 aa)) is condensation 4.

Belongs to the NRP synthetase family. Requires pantetheine 4'-phosphate as cofactor.

It participates in alkaloid biosynthesis. Its function is as follows. Nonribosomal peptide synthetase; part of the gene cluster that mediates the biosynthesis of the ergot alkaloids lentopeptins A and B. Within the pathway, lenA catalyzes the biosynthesis of the Ala-Val-Ala peptide chain, including a cinnamic acid moiety as the starting unit. The release of the peptide from the enzyme is accomplished via a cyclization reaction catalyzed by the terminal condensation-like (Ct) domain of lenA to form the N-acyldiketopiperazine intermediate. The reaction appears to proceed through a nucleophilic attack on the carbonyl carbon by a lone electron pair of the valine amide nitrogen. The phenylalanine ammonia-lyase lenB provides the starter unit for the synthesis of the N-acyldiketopiperazine intermediate by the NRPS lenA, while the cytochrome P450 monooxygenase lenC is involved in the post-NRPS oxidative modification steps to form lentopeptins A and B. The polypeptide is Nonribosomal peptide synthetase lenA (Aspergillus lentulus).